The primary structure comprises 624 residues: Bifunctional 3'-phosphoadenosine 5'-phosphosulfate synthase 1 (624 aa).

Residue M1 is modified to N-acetylmethionine. The segment at 1 to 225 is adenylyl-sulfate kinase; sequence MEIPGSLCKK…VVELLQERDI (225 aa). K12 is modified (N6-acetyllysine). Position 62–67 (62–67) interacts with ATP; sequence GAGKTT. Adenosine 5'-phosphosulfate is bound by residues 89–92, F101, 106–109, 132–133, K171, and 184–185; these read DNIR, REEN, IS, and GF. ATP-binding positions include C207, C212, 419-422, 521-525, and A563; these read QLRN and GRDPA. The segment at 234 to 624 is sulfate adenylyltransferase; that stretch reads VKELYVPENK…VEYYKSLEKA (391 aa).

It in the N-terminal section; belongs to the APS kinase family. This sequence in the C-terminal section; belongs to the sulfate adenylyltransferase family. In terms of assembly, homodimer. In terms of tissue distribution, expressed in the neonatal brain and in cartilage.

The enzyme catalyses sulfate + ATP + H(+) = adenosine 5'-phosphosulfate + diphosphate. It catalyses the reaction adenosine 5'-phosphosulfate + ATP = 3'-phosphoadenylyl sulfate + ADP + H(+). The protein operates within sulfur metabolism; sulfate assimilation. Bifunctional enzyme with both ATP sulfurylase and APS kinase activity, which mediates two steps in the sulfate activation pathway. The first step is the transfer of a sulfate group to ATP to yield adenosine 5'-phosphosulfate (APS), and the second step is the transfer of a phosphate group from ATP to APS yielding 3'-phosphoadenylylsulfate (PAPS: activated sulfate donor used by sulfotransferase). In mammals, PAPS is the sole source of sulfate; APS appears to be only an intermediate in the sulfate-activation pathway. Required for normal biosynthesis of sulfated L-selectin ligands in endothelial cells. This chain is Bifunctional 3'-phosphoadenosine 5'-phosphosulfate synthase 1 (Papss1), found in Mus musculus (Mouse).